The sequence spans 98 residues: NADH-ubiquinone oxidoreductase chain 4L (98 aa).

The next 3 helical transmembrane spans lie at 1 to 21, 29 to 49, and 61 to 81; these read MSLV…GLLM, SLLC…LMIL, and IILL…LVMV.

It belongs to the complex I subunit 4L family. Core subunit of respiratory chain NADH dehydrogenase (Complex I) which is composed of 45 different subunits.

It localises to the mitochondrion inner membrane. The enzyme catalyses a ubiquinone + NADH + 5 H(+)(in) = a ubiquinol + NAD(+) + 4 H(+)(out). In terms of biological role, core subunit of the mitochondrial membrane respiratory chain NADH dehydrogenase (Complex I) which catalyzes electron transfer from NADH through the respiratory chain, using ubiquinone as an electron acceptor. Part of the enzyme membrane arm which is embedded in the lipid bilayer and involved in proton translocation. The sequence is that of NADH-ubiquinone oxidoreductase chain 4L (MT-ND4L) from Capra hircus (Goat).